Reading from the N-terminus, the 631-residue chain is Mitochondrial Rho GTPase (631 aa).

Residues 1-605 lie on the Cytoplasmic side of the membrane; sequence MRAGRVRPLR…TQADLKSSTF (605 aa). A Miro 1 domain is found at 15 to 181; it reads KKDVRILLVG…FYYAQKAVLH (167 aa). Positions 27, 29, 30, 31, and 32 each coordinate GTP. Mg(2+) is bound at residue threonine 31. Aspartate 70 provides a ligand contact to Mg(2+). Serine 72 lines the GTP pocket. N6-acetyllysine is present on lysine 105. 5 residues coordinate GTP: asparagine 131, lysine 132, aspartate 134, alanine 162, and lysine 163. Lysine 166 participates in a covalent cross-link: Glycyl lysine isopeptide (Lys-Gly) (interchain with G-Cter in ubiquitin). Residues 197–232 enclose the EF-hand 1 domain; sequence ACIKALTRIFKISDQDNDGTLNDAELNFFQRICFNT. The Ca(2+) site is built by aspartate 210, aspartate 212, aspartate 214, threonine 216, and glutamate 221. Lysine 248 is covalently cross-linked (Glycyl lysine isopeptide (Lys-Gly) (interchain with G-Cter in ubiquitin)). Positions 317–352 constitute an EF-hand 2 domain; the sequence is HAYLFLQSTFDKHDLDRDCALSPDELKDLFQVFPYI. The Ca(2+) site is built by aspartate 330, aspartate 332, aspartate 334, alanine 336, and glutamate 341. The 164-residue stretch at 429-592 folds into the Miro 2 domain; that stretch reads RNVFRCNVIG…FVKLTTMAMY (164 aa). GTP is bound by residues glycine 441, cysteine 442, glycine 443, lysine 444, threonine 445, glycine 446, lysine 460, lysine 541, aspartate 543, threonine 571, and cysteine 572. Glycine 441 contacts Mg(2+). Lysine 585 is covalently cross-linked (Glycyl lysine isopeptide (Lys-Gly) (interchain with G-Cter in ubiquitin)). The chain crosses the membrane as a helical; Anchor for type IV membrane protein span at residues 606 to 628; the sequence is WLRASFGATVFAVVGFAMYRALL. At 629–631 the chain is on the mitochondrial intermembrane side; sequence KQR.

The protein belongs to the mitochondrial Rho GTPase family. Homodimer. Interacts with the kinesin-binding proteins TRAK1/OIP106 and TRAK2/GRIF1, forming a link between mitochondria and the trafficking apparatus of the microtubules. Interacts with RAP1GDS1. Interacts with ARMCX1. Found in a complex with KIF5B, OGT, RHOT2 and TRAK1. Ubiquitinated by PRKN during mitophagy, leading to its degradation and enhancement of mitophagy. Deubiquitinated by USP30. In terms of processing, acetylation on Lys-105 decreases sensitivity of mitochondrial transport to elevated Ca(2+) levels, increases mitochondrial transport and promotes axon growth. Deacetylated by HDAC6 which blocks mitochondrial transport and mediates axon growth inhibition.

The protein resides in the mitochondrion outer membrane. The catalysed reaction is GTP + H2O = GDP + phosphate + H(+). The enzyme catalyses ATP + H2O = ADP + phosphate + H(+). It catalyses the reaction UTP + H2O = UDP + phosphate + H(+). Its function is as follows. Atypical mitochondrial nucleoside-triphosphatase (NTPase) involved in mitochondrial trafficking. Probably involved in control of anterograde transport of mitochondria and their subcellular distribution. Promotes mitochondrial fission during high calcium conditions. Can hydrolyze GTP, ATP and UTP. This Rattus norvegicus (Rat) protein is Mitochondrial Rho GTPase.